A 615-amino-acid chain; its full sequence is Elongation factor 4 (615 aa).

Residues 14-200 (QQIRNFCIIA…KVAELIPAPT (187 aa)) form the tr-type G domain. Residues 26–31 (DHGKST) and 147–150 (NKID) each bind GTP.

The protein belongs to the TRAFAC class translation factor GTPase superfamily. Classic translation factor GTPase family. LepA subfamily.

It is found in the cell membrane. It carries out the reaction GTP + H2O = GDP + phosphate + H(+). In terms of biological role, required for accurate and efficient protein synthesis under certain stress conditions. May act as a fidelity factor of the translation reaction, by catalyzing a one-codon backward translocation of tRNAs on improperly translocated ribosomes. Back-translocation proceeds from a post-translocation (POST) complex to a pre-translocation (PRE) complex, thus giving elongation factor G a second chance to translocate the tRNAs correctly. Binds to ribosomes in a GTP-dependent manner. The protein is Elongation factor 4 of Corynebacterium diphtheriae (strain ATCC 700971 / NCTC 13129 / Biotype gravis).